The primary structure comprises 1707 residues: Chromatin-remodeling ATPase INO80 (1707 aa).

Disordered stretches follow at residues 1 to 315 (MSTS…DQER), 398 to 429 (KVQA…NNME), 454 to 543 (AQRA…PALM), 673 to 702 (NERE…REAN), and 729 to 761 (DEVE…EGTA). A compositionally biased stretch (polar residues) spans 15-44 (PRQQSQTEIRSILNPSTTSTGAHPSFNQYH). Low complexity predominate over residues 61-75 (STTPSTLGLSLGTPL). The segment covering 78–89 (SERDIGYPRDQK) has biased composition (basic and acidic residues). Residues 90-100 (PTSNYYDPTSD) are compositionally biased toward polar residues. A compositionally biased stretch (basic and acidic residues) spans 101–126 (SSERRPATAESKWSDREAKTSQRRDS). Phosphothreonine is present on threonine 178. Residues 237–247 (EPTPKPQPTPT) are compositionally biased toward pro residues. Positions 266–281 (PEPSSAPSSRQSSVAP) are enriched in low complexity. The stretch at 369–470 (TNKMAKRLEK…AQQTKQILAR (102 aa)) forms a coiled coil. A compositionally biased stretch (basic residues) spans 505-515 (KPKRGGARPRK). Residues 516–526 (SKEQKQAEKDS) show a composition bias toward basic and acidic residues. One can recognise a DBINO domain in the interval 603–728 (IWKDLARKEV…SHFIGKKIKT (126 aa)). Over residues 729 to 756 (DEVERSTDHPDVAVPDKADHAKPDHGDL) the composition is skewed to basic and acidic residues. In terms of domain architecture, Helicase ATP-binding spans 853 to 1025 (VNLYEQGING…WALLHFIMPS (173 aa)). 866–873 (DEMGLGKT) provides a ligand contact to ATP. A DEAQ box motif is present at residues 976–979 (DEAQ). A Helicase C-terminal domain is found at 1426 to 1586 (KLDSLLTKLK…GVDFNTRSKE (161 aa)). The interval 1610 to 1707 (AEQLRYEAEN…AMADGDVDMA (98 aa)) is disordered. Basic and acidic residues predominate over residues 1643 to 1656 (DLYHEGEGHFDDGS).

It belongs to the SNF2/RAD54 helicase family. As to quaternary structure, component of the INO80 chromatin-remodeling complex.

It localises to the nucleus. It carries out the reaction ATP + H2O = ADP + phosphate + H(+). Its function is as follows. ATPase component of the INO80 complex which remodels chromatin by shifting nucleosomes and is involved in DNA repair. The polypeptide is Chromatin-remodeling ATPase INO80 (INO80) (Sclerotinia sclerotiorum (strain ATCC 18683 / 1980 / Ss-1) (White mold)).